The sequence spans 192 residues: Ion-translocating oxidoreductase complex subunit B (192 aa).

A hydrophobic region spans residues 1 to 26; the sequence is MNAIWIAVAAVSLLGLAFGAILGYAS. A 4Fe-4S domain is found at 32–91; the sequence is EDDPVVEKIDEILPQSQCGQCGYPGCRPYAEAISCNGEKINRCAPGGEAVMLKIAELLNV. Cys49, Cys52, Cys57, Cys74, Cys117, Cys120, Cys123, Cys127, Cys147, Cys150, Cys153, and Cys157 together coordinate [4Fe-4S] cluster. 4Fe-4S ferredoxin-type domains are found at residues 108 to 137 and 138 to 167; these read MVAVIDENNCIGCTKCIQACPVDAIVGATR and AMHTVMSDLCTGCNLCVDPCPTHCISLQPV.

Belongs to the 4Fe4S bacterial-type ferredoxin family. RnfB subfamily. As to quaternary structure, the complex is composed of six subunits: RsxA, RsxB, RsxC, RsxD, RsxE and RsxG. [4Fe-4S] cluster serves as cofactor.

The protein localises to the cell inner membrane. Its function is as follows. Part of a membrane-bound complex that couples electron transfer with translocation of ions across the membrane. Required to maintain the reduced state of SoxR. The polypeptide is Ion-translocating oxidoreductase complex subunit B (Escherichia coli O127:H6 (strain E2348/69 / EPEC)).